The chain runs to 217 residues: uncharacterized protein (217 aa).

6 consecutive transmembrane segments (helical) span residues 13 to 35, 50 to 68, 75 to 94, 109 to 131, 152 to 174, and 194 to 216; these read IWLT…IALL, FSLV…ILYL, FLLA…EWRI, MMAL…LFSL, YLAI…AAAV, and GFSL…FAGL.

The protein localises to the cell membrane. This is an uncharacterized protein from Archaeoglobus fulgidus (strain ATCC 49558 / DSM 4304 / JCM 9628 / NBRC 100126 / VC-16).